The following is a 499-amino-acid chain: Lysine--tRNA ligase (499 aa).

Residues E409 and E416 each contribute to the Mg(2+) site.

This sequence belongs to the class-II aminoacyl-tRNA synthetase family. In terms of assembly, homodimer. The cofactor is Mg(2+).

It is found in the cytoplasm. It carries out the reaction tRNA(Lys) + L-lysine + ATP = L-lysyl-tRNA(Lys) + AMP + diphosphate. The chain is Lysine--tRNA ligase from Pseudomonas fluorescens (strain Pf0-1).